Consider the following 425-residue polypeptide: Glutamate-1-semialdehyde 2,1-aminomutase (425 aa).

Lys265 is subject to N6-(pyridoxal phosphate)lysine.

It belongs to the class-III pyridoxal-phosphate-dependent aminotransferase family. HemL subfamily. In terms of assembly, homodimer. It depends on pyridoxal 5'-phosphate as a cofactor.

The protein resides in the cytoplasm. It carries out the reaction (S)-4-amino-5-oxopentanoate = 5-aminolevulinate. It functions in the pathway porphyrin-containing compound metabolism; protoporphyrin-IX biosynthesis; 5-aminolevulinate from L-glutamyl-tRNA(Glu): step 2/2. This Opitutus terrae (strain DSM 11246 / JCM 15787 / PB90-1) protein is Glutamate-1-semialdehyde 2,1-aminomutase.